A 430-amino-acid chain; its full sequence is ATP-dependent RNA helicase RhlB (430 aa).

Positions 9 to 37 (QKFSDFALHPQVIEALESKGFHYCTPIQA) match the Q motif motif. Residues 40-219 (LPLTLSGRDV…FEQMNNAEYV (180 aa)) form the Helicase ATP-binding domain. 53–60 (AQTGTGKT) is a binding site for ATP. The DEAD box signature appears at 165 to 168 (DEAD). The 146-residue stretch at 245–390 (RLLQTLLEEE…LSKYNSDALM (146 aa)) folds into the Helicase C-terminal domain. The segment at 392–430 (DLPAPKRLTRPPRSNNGPRRHNSAPRRSGAPRNNRKRAD) is disordered.

Belongs to the DEAD box helicase family. RhlB subfamily. Component of the RNA degradosome, which is a multiprotein complex involved in RNA processing and mRNA degradation.

The protein resides in the cytoplasm. It carries out the reaction ATP + H2O = ADP + phosphate + H(+). In terms of biological role, DEAD-box RNA helicase involved in RNA degradation. Has RNA-dependent ATPase activity and unwinds double-stranded RNA. This is ATP-dependent RNA helicase RhlB from Pectobacterium atrosepticum (strain SCRI 1043 / ATCC BAA-672) (Erwinia carotovora subsp. atroseptica).